Here is a 224-residue protein sequence, read N- to C-terminus: UPF0111 protein CPn_0681/CP_0066/CPj0681/CpB0708 (224 aa).

It belongs to the UPF0111 family.

The sequence is that of UPF0111 protein CPn_0681/CP_0066/CPj0681/CpB0708 from Chlamydia pneumoniae (Chlamydophila pneumoniae).